Here is a 189-residue protein sequence, read N- to C-terminus: Elongation factor P (189 aa).

This sequence belongs to the elongation factor P family.

It localises to the cytoplasm. The protein operates within protein biosynthesis; polypeptide chain elongation. Involved in peptide bond synthesis. Stimulates efficient translation and peptide-bond synthesis on native or reconstituted 70S ribosomes in vitro. Probably functions indirectly by altering the affinity of the ribosome for aminoacyl-tRNA, thus increasing their reactivity as acceptors for peptidyl transferase. This chain is Elongation factor P, found in Pseudomonas entomophila (strain L48).